We begin with the raw amino-acid sequence, 118 residues long: UPF0295 protein BC_0520 (118 aa).

2 helical membrane-spanning segments follow: residues 12 to 32 (IRTF…LGVF) and 43 to 63 (FMMV…WIGM).

Belongs to the UPF0295 family.

It localises to the cell membrane. The sequence is that of UPF0295 protein BC_0520 from Bacillus cereus (strain ATCC 14579 / DSM 31 / CCUG 7414 / JCM 2152 / NBRC 15305 / NCIMB 9373 / NCTC 2599 / NRRL B-3711).